Reading from the N-terminus, the 325-residue chain is NADH-quinone oxidoreductase subunit H (325 aa).

8 helical membrane-spanning segments follow: residues valine 11 to leucine 31, methionine 81 to valine 101, isoleucine 114 to glycine 134, alanine 149 to alanine 169, methionine 186 to valine 206, phenylalanine 237 to phenylalanine 257, leucine 265 to isoleucine 285, and isoleucine 304 to alanine 324.

Belongs to the complex I subunit 1 family. NDH-1 is composed of 13 different subunits. Subunits NuoA, H, J, K, L, M, N constitute the membrane sector of the complex.

The protein localises to the cell inner membrane. The catalysed reaction is a quinone + NADH + 5 H(+)(in) = a quinol + NAD(+) + 4 H(+)(out). NDH-1 shuttles electrons from NADH, via FMN and iron-sulfur (Fe-S) centers, to quinones in the respiratory chain. The immediate electron acceptor for the enzyme in this species is believed to be ubiquinone. Couples the redox reaction to proton translocation (for every two electrons transferred, four hydrogen ions are translocated across the cytoplasmic membrane), and thus conserves the redox energy in a proton gradient. This subunit may bind ubiquinone. This Photorhabdus laumondii subsp. laumondii (strain DSM 15139 / CIP 105565 / TT01) (Photorhabdus luminescens subsp. laumondii) protein is NADH-quinone oxidoreductase subunit H.